The chain runs to 288 residues: MKKYLLPVLVLCLGYYYSTNEEFRPEMLQGKKVIVTGASKGIGREMAYHLSKMGAHVVLTARSEEGLQKVVSRCLELGAASAHYIAGTMEDMAFAERFVVEAGKLLGGLDMLILNHITQTTMSLFHDDIHSVRRSMEVNFLSYVVLSTAALPMLKQSNGSIAIISSMAGKMTQPLIASYSASKFALDGFFSTIRKEHLMTKVNVSITLCVLGFIDTETALKETSGIILSQAAPKEECALEIIKGTVLRKDEVYYDKSSWTPLLLGNPGRRIMEFLSLRSYNRDLFVSN.

At 1–4 (MKKY) the chain is on the cytoplasmic side. A helical; Signal-anchor for type II membrane protein membrane pass occupies residues 5-20 (LLPVLVLCLGYYYSTN). Over 21–288 (EEFRPEMLQG…SYNRDLFVSN (268 aa)) the chain is Lumenal. Residues 37–63 (GASKGIGREMAYHLSKMGAHVVLTARS), 88–89 (TM), and 115–117 (NHI) each bind NADP(+). N-linked (GlcNAc...) asparagine glycosylation is present at asparagine 158. Residue serine 166 participates in substrate binding. The active-site Proton acceptor is the tyrosine 179. 179 to 183 (YSASK) contacts NADP(+). Residue asparagine 203 is glycosylated (N-linked (GlcNAc...) asparagine). Residues 212 to 218 (GFIDTET) and 214 to 218 (IDTET) each bind NADP(+).

It belongs to the short-chain dehydrogenases/reductases (SDR) family. Homodimer. In terms of processing, glycosylated. In terms of tissue distribution, liver, kidney, lung and testis. Brain. Expressed in liver (at protein level).

Its subcellular location is the endoplasmic reticulum membrane. It carries out the reaction an 11beta-hydroxysteroid + NADP(+) = an 11-oxosteroid + NADPH + H(+). The enzyme catalyses corticosterone + NADP(+) = 11-dehydrocorticosterone + NADPH + H(+). The catalysed reaction is a 7beta-hydroxysteroid + NADP(+) = a 7-oxosteroid + NADPH + H(+). It catalyses the reaction 7-oxocholesterol + NADPH + H(+) = 7beta-hydroxycholesterol + NADP(+). It carries out the reaction chenodeoxycholate + NADP(+) = 7-oxolithocholate + NADPH + H(+). The enzyme catalyses 7-oxolithocholate + NADPH + H(+) = ursodeoxycholate + NADP(+). The catalysed reaction is glycochenodeoxycholate + NADP(+) = 7-oxoglycolithocholate + NADPH + H(+). It catalyses the reaction taurochenodeoxycholate + NADP(+) = 7-oxotaurolithocholate + NADPH + H(+). It carries out the reaction tauroursodeoxycholate + NADP(+) = 7-oxotaurolithocholate + NADPH + H(+). The enzyme catalyses glycoursodeoxycholate + NADP(+) = 7-oxoglycolithocholate + NADPH + H(+). The catalysed reaction is 7-oxopregnenolone + NADPH + H(+) = 7beta-hydroxypregnenolone + NADP(+). It catalyses the reaction 3beta,7alpha-dihydroxyandrost-5-en-17-one + NADP(+) = 3beta-hydroxy-5-androstene-7,17-dione + NADPH + H(+). It carries out the reaction 3beta-hydroxy-5-androstene-7,17-dione + NADPH + H(+) = 3beta,7beta-dihydroxyandrost-5-en-17-one + NADP(+). The enzyme catalyses 3beta-hydroxy-5alpha-androstane-7,17-dione + NADPH + H(+) = 3beta,7beta-dihydroxy-5alpha-androstan-17-one + NADP(+). In terms of biological role, controls the reversible conversion of biologically active glucocorticoids such as 11-dehydrocorticosterone to corticosterone using NADP(H). Participates in the corticosteroid receptor-mediated anti-inflammatory response, as well as metabolic and homeostatic processes. Bidirectional in vitro, predominantly functions as a reductase in vivo, thereby increasing the concentration of active glucocorticoids. It has broad substrate specificity, besides glucocorticoids, it accepts other steroid and sterol substrates. Interconverts 7-oxo- and 7-hydroxy-neurosteroids such as 7-oxopregnenolone and 7beta-hydroxypregnenolone, 7-oxodehydroepiandrosterone (3beta-hydroxy-5-androstene-7,17-dione) and 7beta-hydroxydehydroepiandrosterone (3beta,7beta-dihydroxyandrost-5-en-17-one), among others. Catalyzes the stereo-specific conversion of the major dietary oxysterol, 7-ketocholesterol (7-oxocholesterol), into the more polar 7-beta-hydroxycholesterol metabolite. 7-oxocholesterol is one of the most important oxysterols, it participates in several events such as induction of apoptosis, accumulation in atherosclerotic lesions, lipid peroxidation, and induction of foam cell formation. Mediates the 7-oxo reduction of 7-oxolithocholate mainly to chenodeoxycholate, and to a lesser extent to ursodeoxycholate, both in its free form and when conjugated to glycine or taurine, providing a link between glucocorticoid activation and bile acid metabolism. Catalyzes the synthesis of 7-beta-25-dihydroxycholesterol from 7-oxo-25-hydroxycholesterol in vitro, which acts as a ligand for the G-protein-coupled receptor (GPCR) Epstein-Barr virus-induced gene 2 (EBI2) and may thereby regulate immune cell migration. The protein is 11-beta-hydroxysteroid dehydrogenase 1 of Rattus norvegicus (Rat).